Consider the following 505-residue polypeptide: 2,3-bisphosphoglycerate-independent phosphoglycerate mutase (505 aa).

Mn(2+) contacts are provided by Asp12 and Ser62. Ser62 acts as the Phosphoserine intermediate in catalysis. Substrate is bound by residues His123, 153 to 154 (RD), Arg185, Arg191, 257 to 260 (RPDR), and Lys330. Mn(2+) is bound by residues Asp397, His401, Asp438, His439, and His456.

This sequence belongs to the BPG-independent phosphoglycerate mutase family. As to quaternary structure, monomer. Requires Mn(2+) as cofactor.

It catalyses the reaction (2R)-2-phosphoglycerate = (2R)-3-phosphoglycerate. It functions in the pathway carbohydrate degradation; glycolysis; pyruvate from D-glyceraldehyde 3-phosphate: step 3/5. In terms of biological role, catalyzes the interconversion of 2-phosphoglycerate and 3-phosphoglycerate. The polypeptide is 2,3-bisphosphoglycerate-independent phosphoglycerate mutase (Staphylococcus epidermidis (strain ATCC 35984 / DSM 28319 / BCRC 17069 / CCUG 31568 / BM 3577 / RP62A)).